An 86-amino-acid polypeptide reads, in one-letter code: Small ribosomal subunit protein bS18 (86 aa).

The protein belongs to the bacterial ribosomal protein bS18 family. In terms of assembly, part of the 30S ribosomal subunit. Forms a tight heterodimer with protein bS6.

Functionally, binds as a heterodimer with protein bS6 to the central domain of the 16S rRNA, where it helps stabilize the platform of the 30S subunit. The polypeptide is Small ribosomal subunit protein bS18 (Maridesulfovibrio salexigens (strain ATCC 14822 / DSM 2638 / NCIMB 8403 / VKM B-1763) (Desulfovibrio salexigens)).